Here is a 358-residue protein sequence, read N- to C-terminus: Sulfate/thiosulfate import ATP-binding protein CysA (358 aa).

The 235-residue stretch at 3–237 (IKIENLEKHF…PQTPFVTQFV (235 aa)) folds into the ABC transporter domain. 35-42 (GPSGCGKT) is a binding site for ATP.

It belongs to the ABC transporter superfamily. Sulfate/tungstate importer (TC 3.A.1.6) family. The complex is composed of two ATP-binding proteins (CysA), two transmembrane proteins (CysT and CysW) and a solute-binding protein (CysP).

The protein localises to the cell inner membrane. The enzyme catalyses sulfate(out) + ATP + H2O = sulfate(in) + ADP + phosphate + H(+). The catalysed reaction is thiosulfate(out) + ATP + H2O = thiosulfate(in) + ADP + phosphate + H(+). In terms of biological role, part of the ABC transporter complex CysAWTP involved in sulfate/thiosulfate import. Responsible for energy coupling to the transport system. This is Sulfate/thiosulfate import ATP-binding protein CysA from Mannheimia succiniciproducens (strain KCTC 0769BP / MBEL55E).